A 194-amino-acid chain; its full sequence is RNA polymerase II subunit A C-terminal domain phosphatase SSU72 like protein 2 (194 aa).

The protein belongs to the SSU72 phosphatase family.

The protein localises to the nucleus. It carries out the reaction O-phospho-L-seryl-[protein] + H2O = L-seryl-[protein] + phosphate. It catalyses the reaction O-phospho-L-threonyl-[protein] + H2O = L-threonyl-[protein] + phosphate. Functionally, protein phosphatase that catalyzes the dephosphorylation of the C-terminal domain of RNA polymerase II. Plays a role in RNA processing and termination. The chain is RNA polymerase II subunit A C-terminal domain phosphatase SSU72 like protein 2 from Homo sapiens (Human).